We begin with the raw amino-acid sequence, 639 residues long: MDLKSWILLSCTLLPLSVTSYECYVTPCTRDIIIVVDGSSSMQTSTYVSQEINMITKLTYSWTLDDAKVRLALVGAYLGNEFNGLDYFTDSSLIEKRLQSFRLAAMQYGLFSGDFNTTVRFLDERYVGPRATFGPRANVQKRIIIFSAHKGASDIASTKSKLQEFAQLGYAVTIVGIGVSEDVYKGTFYHKFVSVQWFELGVVAQSIIDTITEDGICFLDQGWTTPKQEICTTSTTTTRAPTTTTTVTTVKGVTGKPATTAKPVPPTHPPFPVGDYQDCSCTTQSLYIDIIFVIDVSEGMGQGGLMMVKAEINTLVGQMSLDPNIQKHVQVGLIKYSDKAEVVFKPSDYTNEDEFTEDLWSDPRLEDVDEKSDEVNLHLGLQQAAKMTASMRNGVRKVIVVYAASYNDEGNDDARQIAANIRETGYAIITVAFVEPESSNLVMKIGEIASPRMNFTSFRDDLLVEQMEDALCQVNCYCPNGWKQLVLENRKYGECFFPTKIDASWTASKFECPVLSKEHTGNGHLVYVNSELKNTFLNQFYMDNWYPENQENPNYDIGYYYDQATKKFIWVNGVTNNPYSNWATGHPDVKQGDCVMAKLLKDSKNDFRWNSVSCTSEYGRGLCQEAACDTDFYCAPSSN.

Residues 1-19 (MDLKSWILLSCTLLPLSVT) form the signal peptide. VWFA domains follow at residues 31–178 (DIII…VGIG) and 289–474 (DIIF…LCQV). A C-type lectin domain is found at 491-618 (KYGECFFPTK…WNSVSCTSEY (128 aa)). Cysteine 594 and cysteine 614 are disulfide-bonded.

The protein localises to the secreted. The sequence is that of C-type lectin domain-containing protein 160 (clec-160) from Caenorhabditis elegans.